A 391-amino-acid polypeptide reads, in one-letter code: Phosphoglycerate kinase (391 aa).

Substrate is bound by residues 21–23 (DFN), arginine 41, 64–67 (HLGR), arginine 121, and arginine 154. ATP-binding positions include lysine 205, glutamate 322, and 348 to 351 (GGDS).

The protein belongs to the phosphoglycerate kinase family. Monomer.

Its subcellular location is the cytoplasm. The catalysed reaction is (2R)-3-phosphoglycerate + ATP = (2R)-3-phospho-glyceroyl phosphate + ADP. The protein operates within carbohydrate degradation; glycolysis; pyruvate from D-glyceraldehyde 3-phosphate: step 2/5. This is Phosphoglycerate kinase from Solibacter usitatus (strain Ellin6076).